The chain runs to 334 residues: Aspartate carbamoyltransferase catalytic subunit (334 aa).

Residues arginine 71 and threonine 72 each coordinate carbamoyl phosphate. An L-aspartate-binding site is contributed by lysine 99. Positions 121, 151, and 154 each coordinate carbamoyl phosphate. L-aspartate is bound by residues arginine 184 and arginine 239. 2 residues coordinate carbamoyl phosphate: glycine 280 and proline 281.

Belongs to the aspartate/ornithine carbamoyltransferase superfamily. ATCase family. In terms of assembly, heterododecamer (2C3:3R2) of six catalytic PyrB chains organized as two trimers (C3), and six regulatory PyrI chains organized as three dimers (R2).

The enzyme catalyses carbamoyl phosphate + L-aspartate = N-carbamoyl-L-aspartate + phosphate + H(+). The protein operates within pyrimidine metabolism; UMP biosynthesis via de novo pathway; (S)-dihydroorotate from bicarbonate: step 2/3. Its function is as follows. Catalyzes the condensation of carbamoyl phosphate and aspartate to form carbamoyl aspartate and inorganic phosphate, the committed step in the de novo pyrimidine nucleotide biosynthesis pathway. This is Aspartate carbamoyltransferase catalytic subunit from Pseudomonas syringae pv. syringae (strain B728a).